Here is a 316-residue protein sequence, read N- to C-terminus: Tyrosine recombinase XerD (316 aa).

One can recognise a Core-binding (CB) domain in the interval 4–97; that stretch reads AALQTQLQGY…AVRGLHRFAV (94 aa). Residues 118-309 form the Tyr recombinase domain; that stretch reads RLPKSLTVDE…TVQALREVWA (192 aa). Catalysis depends on residues Arg-162, Lys-186, His-261, Arg-264, and His-287. Tyr-296 functions as the O-(3'-phospho-DNA)-tyrosine intermediate in the catalytic mechanism.

It belongs to the 'phage' integrase family. XerD subfamily. As to quaternary structure, forms a cyclic heterotetrameric complex composed of two molecules of XerC and two molecules of XerD.

Its subcellular location is the cytoplasm. Site-specific tyrosine recombinase, which acts by catalyzing the cutting and rejoining of the recombining DNA molecules. The XerC-XerD complex is essential to convert dimers of the bacterial chromosome into monomers to permit their segregation at cell division. It also contributes to the segregational stability of plasmids. In Mycobacterium leprae (strain TN), this protein is Tyrosine recombinase XerD.